The primary structure comprises 459 residues: Cysteine--tRNA ligase (459 aa).

C28 contacts Zn(2+). Positions 30–40 (VTIYDLCHIGH) match the 'HIGH' region motif. Positions 209, 234, and 238 each coordinate Zn(2+). The 'KMSKS' region signature appears at 266–270 (KMSKS). K269 serves as a coordination point for ATP.

It belongs to the class-I aminoacyl-tRNA synthetase family. In terms of assembly, monomer. The cofactor is Zn(2+).

The protein localises to the cytoplasm. The enzyme catalyses tRNA(Cys) + L-cysteine + ATP = L-cysteinyl-tRNA(Cys) + AMP + diphosphate. The chain is Cysteine--tRNA ligase from Shewanella baltica (strain OS185).